The primary structure comprises 185 residues: MAEDRFPGWHGTTILAVRRGGEVVVAGDGQVSLGQTVIKGTARKVRRLSPGGHEVVAGFAGSTADAFTLLERLEKKLEAAPGQLARACVQLAKDWRMDKYLRNLEAMLIVTDGETLLVLTGAGDVLEPEHDVTAIGSGGNFALAAARGLMATDLPAEEIARKAMAIAADICVYTNGNLTVERISK.

The active site involves T12. Residues A168, C171, and T174 each contribute to the Na(+) site.

Belongs to the peptidase T1B family. HslV subfamily. A double ring-shaped homohexamer of HslV is capped on each side by a ring-shaped HslU homohexamer. The assembly of the HslU/HslV complex is dependent on binding of ATP.

It localises to the cytoplasm. The catalysed reaction is ATP-dependent cleavage of peptide bonds with broad specificity.. With respect to regulation, allosterically activated by HslU binding. Its function is as follows. Protease subunit of a proteasome-like degradation complex believed to be a general protein degrading machinery. This Cereibacter sphaeroides (strain ATCC 17029 / ATH 2.4.9) (Rhodobacter sphaeroides) protein is ATP-dependent protease subunit HslV.